The chain runs to 35 residues: Conotoxin TxMEKL-0422 (35 aa).

The interval 1–35 is disordered; sequence NPASCCSCADVDPGRASRKTPKGEDQVFIKEKDRC. Residues 21–35 show a composition bias toward basic and acidic residues; that stretch reads PKGEDQVFIKEKDRC.

Contains disulfide bonds. As to expression, expressed by the venom duct.

Its subcellular location is the secreted. The polypeptide is Conotoxin TxMEKL-0422 (Conus textile (Cloth-of-gold cone)).